We begin with the raw amino-acid sequence, 1216 residues long: Metabotropic glycine receptor (1216 aa).

The first 23 residues, 1-23, serve as a signal peptide directing secretion; that stretch reads MGVMAYPFLFCLLLVHFGLGAIG. At 24 to 417 the chain is on the extracellular side; it reads ASREAPSRPD…CFVQEDKYLR (394 aa). Positions 25 to 65 are disordered; it reads SREAPSRPDPPRERTLRAKQHAQQPARASASDPSAPWSRST. The segment covering 28–40 has biased composition (basic and acidic residues); sequence APSRPDPPRERTL. Over residues 46–64 the composition is skewed to low complexity; it reads AQQPARASASDPSAPWSRS. A cache-like region region spans residues 85–281; it reads YLYTGDSHKL…CENGSYKPGW (197 aa). N98 and N143 each carry an N-linked (GlcNAc...) asparagine glycan. The cysteines at positions 99 and 272 are disulfide-linked. The glycine site is built by S172 and R173. An N-linked (GlcNAc...) asparagine glycan is attached at N215. A glycine-binding site is contributed by E271. N274 is a glycosylation site (N-linked (GlcNAc...) asparagine). Glycine is bound at residue D307. A glycan (N-linked (GlcNAc...) asparagine) is linked at N333. The helical transmembrane segment at 418–439 threads the bilayer; the sequence is LAIISFQALCMLLDFLSMLVVY. The Cytoplasmic portion of the chain corresponds to 440–451; sequence RFRKAKSIRASG. The chain crosses the membrane as a helical span at residues 452 to 474; sequence LILLETILFGSLLLYFPVVILYF. The Extracellular portion of the chain corresponds to 475 to 478; that stretch reads EPST. A helical transmembrane segment spans residues 479-501; the sequence is FRCILLRWVRLLGFATVYGTVTL. C481 and C573 form a disulfide bridge. The Cytoplasmic portion of the chain corresponds to 502–525; the sequence is KLHRVLKVFLSRTAQRIPYMTGGR. A helical membrane pass occupies residues 526–547; that stretch reads VMRMLAVILLVVFWFLVGWTSS. The Extracellular portion of the chain corresponds to 548 to 576; the sequence is VCQNLERHISLIGQGRTSDHLIFSMCLVE. Residues 577–597 form a helical membrane-spanning segment; the sequence is RWDYMTAAAEFLFLLWGVYLC. The Cytoplasmic portion of the chain corresponds to 598–611; the sequence is YAVRTVPSAFHEPR. A helical transmembrane segment spans residues 612–633; it reads YMAVAVHNELIISAIFHTIRFV. Residues 634 to 642 are Extracellular-facing; that stretch reads LASRLQSDW. A helical transmembrane segment spans residues 643–664; that stretch reads MLMLYFAHTHLTVTVTIGLLLI. The Cytoplasmic portion of the chain corresponds to 665–1216; it reads PKFSHSSNNP…NEEVRLARKV (552 aa). A phosphoserine mark is found at S694, S705, and S708. 2 disordered regions span residues 757–875 and 911–1000; these read RITE…ESVP and KEKT…HMKD. The segment covering 769–781 has biased composition (basic and acidic residues); sequence CSKEDKDGGEHGS. K774 is covalently cross-linked (Glycyl lysine isopeptide (Lys-Gly) (interchain with G-Cter in ubiquitin)). Residues 864–873 are compositionally biased toward polar residues; sequence EDSQAVSTES. The residue at position 866 (S866) is a Phosphoserine. Residues 926–944 are compositionally biased toward basic and acidic residues; it reads VEERAKAQKALPRERETNR. Polar residues-rich tracts occupy residues 945–963 and 980–991; these read KYSN…PNSS and QRANPTTANSDL. The residue at position 947 (S947) is a Phosphoserine. Residues 1007–1011 carry the VCPWE motif 1 motif; sequence VCPWE. The interval 1038–1072 is disordered; it reads ERNPTFSLKEKSHPKPKAADLCQQSNPKSVDKAEV. Residue S1066 is modified to Phosphoserine. Positions 1072-1076 match the VCPWE motif 2 motif; it reads VCPWE. S1081 carries the phosphoserine modification. The segment at 1128 to 1167 is disordered; it reads SKVENENLNQLGEQEKKTSSSERNVPDSHNSSNNFQPPLM. Residues 1140–1153 show a composition bias toward basic and acidic residues; that stretch reads EQEKKTSSSERNVP. Residues 1154-1163 are compositionally biased toward polar residues; sequence DSHNSSNNFQ. The VCPWE motif 3 motif lies at 1172 to 1176; that stretch reads VCPWE.

Belongs to the G-protein coupled receptor 3 family. In terms of assembly, homodimer. Associates with the RGS7-GNB5 complex, promoting its localization to the cell membrane and regulating its GTPase activator activity. Interacts (via VCPWE motifs) with GNAO1. Interacts with GPC4. Interacts with EGFLAM.

The protein resides in the cell membrane. It is found in the postsynaptic cell membrane. Its subcellular location is the presynaptic cell membrane. It localises to the nucleus. Metabotropic receptor for glycine that controls synapse formation and function in the brain. Acts as an atypical G-protein coupled receptor that recruits and regulates the RGS7-GNB5 complex instead of activating G proteins. In absence of glycine ligand, promotes the GTPase activator activity of RGS7, increasing the GTPase activity of G protein alpha subunits, thereby driving them into their inactive GDP-bound form. Glycine-binding changes the conformation of the intracellular surface, inhibiting the GTPase activator activity of the RGS7-GNB5 complex, promoting G protein alpha subunits into their active GTP-bound form and regulating cAMP levels. Also able to bind taurine, a compound closely related to glycine, but with a two-fold lower affinity. Glycine receptor-dependent regulation of cAMP controls key ion channels, kinases and neurotrophic factors involved in neuronal excitability and synaptic transmission. Plays a pivotal role in regulating mood and cognition via its ability to regulate neuronal excitability in L2/L3 pyramidal neurons of the prefrontal cortex. Also involved in spatial learning by regulating hippocampal CA1 neuronal excitability. Acts as a synaptic organizer in the hippocampus, required for proper mossy fiber-CA3 neurocircuitry establishment, structure and function: induces presynaptic differentiation in contacting axons via its interaction with GPC4. In addition to glycine, may also act as a receptor for osteocalcin (BGLAP) hormone: osteocalcin-binding initiates a signaling response that prevents neuronal apoptosis in the hippocampus and regulates the synthesis of neurotransmitters. This is Metabotropic glycine receptor (GPR158) from Bos taurus (Bovine).